Here is a 222-residue protein sequence, read N- to C-terminus: DNA-directed RNA polymerase V subunit 5A (222 aa).

This sequence belongs to the archaeal Rpo5/eukaryotic RPB5 RNA polymerase subunit family. Component of the RNA polymerase V complex. As to expression, expressed in roots, leaves, siliques and seeds, and to a lower level, in flower buds and flowers.

Its subcellular location is the nucleus. DNA-dependent RNA polymerase catalyzes the transcription of DNA into RNA using the four ribonucleoside triphosphates as substrates. Component of RNA polymerase V involved in RNA-directed DNA methylation-dependent (RdDM) silencing of endogenous repeated sequences, including transposable elements. Required for establishment of DNA methylation. The sequence is that of DNA-directed RNA polymerase V subunit 5A (NRPE5A) from Arabidopsis thaliana (Mouse-ear cress).